The following is a 77-amino-acid chain: ATP synthase subunit c (77 aa).

Helical transmembrane passes span isoleucine 13–alanine 33 and phenylalanine 55–phenylalanine 75.

Belongs to the ATPase C chain family. In terms of assembly, F-type ATPases have 2 components, F(1) - the catalytic core - and F(0) - the membrane proton channel. F(1) has five subunits: alpha(3), beta(3), gamma(1), delta(1), epsilon(1). F(0) has three main subunits: a(1), b(2) and c(10-14). The alpha and beta chains form an alternating ring which encloses part of the gamma chain. F(1) is attached to F(0) by a central stalk formed by the gamma and epsilon chains, while a peripheral stalk is formed by the delta and b chains.

The protein localises to the cell membrane. F(1)F(0) ATP synthase produces ATP from ADP in the presence of a proton or sodium gradient. F-type ATPases consist of two structural domains, F(1) containing the extramembraneous catalytic core and F(0) containing the membrane proton channel, linked together by a central stalk and a peripheral stalk. During catalysis, ATP synthesis in the catalytic domain of F(1) is coupled via a rotary mechanism of the central stalk subunits to proton translocation. Its function is as follows. Key component of the F(0) channel; it plays a direct role in translocation across the membrane. A homomeric c-ring of between 10-14 subunits forms the central stalk rotor element with the F(1) delta and epsilon subunits. The chain is ATP synthase subunit c from Clavibacter sepedonicus (Clavibacter michiganensis subsp. sepedonicus).